Consider the following 430-residue polypeptide: Adenosylhomocysteinase (430 aa).

Positions 56, 131, and 156 each coordinate substrate. 157-159 (TTT) lines the NAD(+) pocket. 2 residues coordinate substrate: K186 and D190. NAD(+) is bound by residues N191, 220–225 (GFGDVG), E243, N278, 299–301 (IGH), and N344.

The protein belongs to the adenosylhomocysteinase family. NAD(+) serves as cofactor.

It localises to the cytoplasm. The catalysed reaction is S-adenosyl-L-homocysteine + H2O = L-homocysteine + adenosine. It participates in amino-acid biosynthesis; L-homocysteine biosynthesis; L-homocysteine from S-adenosyl-L-homocysteine: step 1/1. May play a key role in the regulation of the intracellular concentration of adenosylhomocysteine. The sequence is that of Adenosylhomocysteinase from Halorhodospira halophila (strain DSM 244 / SL1) (Ectothiorhodospira halophila (strain DSM 244 / SL1)).